Consider the following 568-residue polypeptide: Protein yellow (568 aa).

Residues 1 to 28 (MHAQDKGGVLPGLSLLLIAVAMVCPSQA) form the signal peptide. 2 N-linked (GlcNAc...) asparagine glycosylation sites follow: Asn-151 and Asn-222.

It belongs to the major royal jelly protein family.

The protein resides in the secreted. Functionally, controls the pigmentation pattern of the adult cuticle and larval mouth parts. This is Protein yellow (y) from Drosophila guanche (Fruit fly).